The chain runs to 253 residues: Bridging integrator 3 (253 aa).

Positions 9 to 232 constitute a BAR domain; it reads GQPKKQIVSK…LDQPGHSDEH (224 aa). Coiled-coil stretches lie at residues 16–57 and 120–151; these read VSKT…AMSK and SLNM…KEKT.

It localises to the cytoplasm. It is found in the cytoskeleton. In terms of biological role, involved in cytokinesis and septation where it has a role in the localization of F-actin. This is Bridging integrator 3 (Bin3) from Rattus norvegicus (Rat).